The chain runs to 248 residues: tRNA (guanine-N(1)-)-methyltransferase (248 aa).

Residues Gly-116 and 136–141 each bind S-adenosyl-L-methionine; that span reads VGDYVL.

Belongs to the RNA methyltransferase TrmD family. Homodimer.

It is found in the cytoplasm. The catalysed reaction is guanosine(37) in tRNA + S-adenosyl-L-methionine = N(1)-methylguanosine(37) in tRNA + S-adenosyl-L-homocysteine + H(+). In terms of biological role, specifically methylates guanosine-37 in various tRNAs. The polypeptide is tRNA (guanine-N(1)-)-methyltransferase (Psychromonas ingrahamii (strain DSM 17664 / CCUG 51855 / 37)).